Consider the following 396-residue polypeptide: Elongation factor Tu (396 aa).

One can recognise a tr-type G domain in the interval 10–206 (KPHCNIGTIG…NVDEYIPQPE (197 aa)). The G1 stretch occupies residues 19–26 (GHVDHGKT). Residue 19–26 (GHVDHGKT) participates in GTP binding. Thr-26 lines the Mg(2+) pocket. The segment at 60 to 64 (GITIS) is G2. The segment at 81–84 (DCPG) is G3. Residues 81 to 85 (DCPGH) and 136 to 139 (NKCD) each bind GTP. The G4 stretch occupies residues 136 to 139 (NKCD). The tract at residues 174–176 (SAL) is G5.

The protein belongs to the TRAFAC class translation factor GTPase superfamily. Classic translation factor GTPase family. EF-Tu/EF-1A subfamily. Monomer.

The protein resides in the cytoplasm. The catalysed reaction is GTP + H2O = GDP + phosphate + H(+). In terms of biological role, GTP hydrolase that promotes the GTP-dependent binding of aminoacyl-tRNA to the A-site of ribosomes during protein biosynthesis. This chain is Elongation factor Tu, found in Bradyrhizobium diazoefficiens (strain JCM 10833 / BCRC 13528 / IAM 13628 / NBRC 14792 / USDA 110).